Reading from the N-terminus, the 635-residue chain is Transcription termination factor FttA (635 aa).

2 KHa regions span residues 1–69 and 4–69; these read MSAE…PSVL and EDIL…PSVL. Residues 70–137 are KHb; that stretch reads VEPDIAKDKI…WAPKPVRTPP (68 aa). 2 metallo-beta-lactamase N-terminus regions span residues 179–382 and 179–383; these read WVRT…YGGY and WVRT…GGYD. Beta-Casp regions lie at residues 180–577 and 383–576; these read VRTS…GFSG and DDVL…EGFS. Zn(2+)-binding residues include histidine 241, histidine 243, aspartate 245, histidine 246, histidine 328, and aspartate 351. Metallo-beta-lactamase C-terminus regions lie at residues 577–635 and 578–635; these read GHSD…IRLR and HSDR…IRLR. Histidine 602 provides a ligand contact to Zn(2+).

It belongs to the metallo-beta-lactamase superfamily. RNA-metabolizing metallo-beta-lactamase-like family. FttA subfamily. In terms of assembly, homodimer. Interacts with RNA polymerase (RNAP); interaction is not dependent on DNA or RNA. Interacts with the Spt4-Spt5 complex. Zn(2+) serves as cofactor.

It localises to the chromosome. Its function is as follows. Terminates transcription on the whole genome. Termination is linked to FttA-mediated RNA cleavage and does not require NTP hydrolysis. Cleaves endonucleolytically at the RNA exit channel of RNA polymerase (RNAP); the 5'-3' exonuclease activity of this protein degrades the nascent RNA released from RNAP. Functionally, terminates transcription genome-wide. Transcription termination is most effective in vivo on RNAs with more than one U4-tract in their 3'-ends (including non-protein coding RNAs); U4-tracts are recognized by this protein. Also plays a role in termination of RNAs without U-tracts by an unknown mechanism. Has endonuclease activity after U-rich tracts in transcription termination sites. Binds RNA at U4-tracts found directly upstream of the experimentally determined transcription termination sites; binds preferentially to RNAs with more U4-tracts at their 3'-ends. This chain is Transcription termination factor FttA, found in Methanococcus maripaludis (strain DSM 14266 / JCM 13030 / NBRC 101832 / S2 / LL).